Consider the following 261-residue polypeptide: MAGSLFDTSAMEKPRILILGGTTEARELARRLAEDVRYDTAISLAGRTADPRPQPVKTRIGGFGGADGLAHFVHDENIALLVDATHPFAARISHNAADAAQRTGVALIALRRPEWVPLPGDRWTAVDSVVEAVSALGDRRRRVFLAIGRQEAFHFEVAPQHSYVIRSVDPVTPPLNLPDQEAILATGPFAEADEAALLRSRQIDVIVAKNSGGSATYGKIAAARRLGIEVIMVERRKPADVPTVGSCDEALNRIAHWLAPA.

The protein belongs to the precorrin-6x reductase family.

It catalyses the reaction precorrin-6B + NADP(+) = precorrin-6A + NADPH + 2 H(+). It participates in cofactor biosynthesis; adenosylcobalamin biosynthesis; cob(II)yrinate a,c-diamide from precorrin-2 (aerobic route): step 6/10. Its function is as follows. Catalyzes the reduction of the macrocycle of precorrin-6X into precorrin-6Y. This Sinorhizobium sp protein is Precorrin-6A reductase (cobK).